The sequence spans 347 residues: Isopentenyl-diphosphate delta-isomerase (347 aa).

Substrate is bound at residue 5 to 6 (RK). Residues S61, 62-64 (SMT), S92, and N120 contribute to the FMN site. 92–94 (SMR) lines the substrate pocket. A substrate-binding site is contributed by Q159. E160 contributes to the Mg(2+) binding site. FMN is bound by residues K189, S214, T219, 269–271 (GLR), and 290–291 (AR).

Belongs to the IPP isomerase type 2 family. As to quaternary structure, homooctamer. Dimer of tetramers. Requires FMN as cofactor. NADPH is required as a cofactor. Mg(2+) serves as cofactor.

The protein resides in the cytoplasm. The enzyme catalyses isopentenyl diphosphate = dimethylallyl diphosphate. Its function is as follows. Involved in the biosynthesis of isoprenoids. Catalyzes the 1,3-allylic rearrangement of the homoallylic substrate isopentenyl (IPP) to its allylic isomer, dimethylallyl diphosphate (DMAPP). This is Isopentenyl-diphosphate delta-isomerase from Thermoplasma volcanium (strain ATCC 51530 / DSM 4299 / JCM 9571 / NBRC 15438 / GSS1).